We begin with the raw amino-acid sequence, 582 residues long: Inositol transporter 4 (582 aa).

12 helical membrane-spanning segments follow: residues 35–55 (GIGGLLFGYDTGVISGALLFI), 70–90 (STIVSMAVAGAIVGAAVGGWI), 105–125 (VLFLIGAIVMAFAPAPWVIIV), 128–148 (IFVGFGVGMASMTSPLYISEA), 162–182 (GLLITGGQFFSYLINLAFVHT), 188–208 (WMLGVAGVPAIVQFVLMLSLP), 290–310 (FVGINTVMYYSPSIVQFAGYA), 317–337 (ALSLITSGLNALGSIVSMMFV), 345–365 (LMIISMFGIIACLIILATVFS), 456–476 (FGFLAIVFLGLYIVVYAPGMG), 494–514 (LGGGIAAVSNWVSNLIVSESF), and 525–545 (GTFLLFAGFSTIGLFFIWLLV).

Belongs to the major facilitator superfamily. Sugar transporter (TC 2.A.1.1) family. In terms of tissue distribution, highly expressed in pollen and phloem companion cells.

It is found in the cell membrane. Its function is as follows. Plasma membrane inositol-proton symporter. Mediates high-affinity myoinositol-proton symport across the plasma membrane. Active with myoinositol, scylloinositol and D-chiroinositol. Low activity with mucoinositol and alloinositol. This is Inositol transporter 4 (INT4) from Arabidopsis thaliana (Mouse-ear cress).